We begin with the raw amino-acid sequence, 157 residues long: Protein Smg homolog (157 aa).

This sequence belongs to the Smg family.

This is Protein Smg homolog from Shewanella putrefaciens (strain CN-32 / ATCC BAA-453).